Reading from the N-terminus, the 364-residue chain is 3-methyl-2-oxobutanoate hydroxymethyltransferase 1, mitochondrial (364 aa).

The N-terminal 59 residues, 1-59, are a transit peptide targeting the mitochondrion; that stretch reads MMMMMRRAFRHLARQQRRPLSHVPESAVYGGPRPQDVGAAAGAGAGAGATRRVTVTTLR. Asp94 and Asp133 together coordinate Mg(2+). 3-methyl-2-oxobutanoate contacts are provided by residues 94–95, Asp133, and Lys163; that span reads DS. Glu165 contributes to the Mg(2+) binding site. Glu233 (proton acceptor) is an active-site residue.

Belongs to the PanB family. Mg(2+) is required as a cofactor.

The protein resides in the mitochondrion. The enzyme catalyses 3-methyl-2-oxobutanoate + (6R)-5,10-methylene-5,6,7,8-tetrahydrofolate + H2O = 2-dehydropantoate + (6S)-5,6,7,8-tetrahydrofolate. The protein operates within cofactor biosynthesis; (R)-pantothenate biosynthesis; (R)-pantoate from 3-methyl-2-oxobutanoate: step 1/2. Functionally, catalyzes the reversible reaction in which hydroxymethyl group from 5,10-methylenetetrahydrofolate is transferred onto alpha-ketoisovalerate to form ketopantoate. The polypeptide is 3-methyl-2-oxobutanoate hydroxymethyltransferase 1, mitochondrial (KPHMT1) (Oryza sativa subsp. japonica (Rice)).